The primary structure comprises 447 residues: UDP-N-acetylmuramoylalanine--D-glutamate ligase (447 aa).

112 to 118 (GTNGKST) serves as a coordination point for ATP.

This sequence belongs to the MurCDEF family.

The protein resides in the cytoplasm. The catalysed reaction is UDP-N-acetyl-alpha-D-muramoyl-L-alanine + D-glutamate + ATP = UDP-N-acetyl-alpha-D-muramoyl-L-alanyl-D-glutamate + ADP + phosphate + H(+). Its pathway is cell wall biogenesis; peptidoglycan biosynthesis. Its function is as follows. Cell wall formation. Catalyzes the addition of glutamate to the nucleotide precursor UDP-N-acetylmuramoyl-L-alanine (UMA). This Legionella pneumophila (strain Lens) protein is UDP-N-acetylmuramoylalanine--D-glutamate ligase.